A 406-amino-acid chain; its full sequence is Serine hydroxymethyltransferase (406 aa).

(6S)-5,6,7,8-tetrahydrofolate is bound by residues Leu-111 and 115 to 117 (GHL). Lys-220 bears the N6-(pyridoxal phosphate)lysine mark.

Belongs to the SHMT family. As to quaternary structure, homodimer. Requires pyridoxal 5'-phosphate as cofactor.

The protein resides in the cytoplasm. It carries out the reaction (6R)-5,10-methylene-5,6,7,8-tetrahydrofolate + glycine + H2O = (6S)-5,6,7,8-tetrahydrofolate + L-serine. It participates in one-carbon metabolism; tetrahydrofolate interconversion. It functions in the pathway amino-acid biosynthesis; glycine biosynthesis; glycine from L-serine: step 1/1. In terms of biological role, catalyzes the reversible interconversion of serine and glycine with tetrahydrofolate (THF) serving as the one-carbon carrier. This reaction serves as the major source of one-carbon groups required for the biosynthesis of purines, thymidylate, methionine, and other important biomolecules. Also exhibits THF-independent aldolase activity toward beta-hydroxyamino acids, producing glycine and aldehydes, via a retro-aldol mechanism. The protein is Serine hydroxymethyltransferase of Mycoplasma pneumoniae (strain ATCC 29342 / M129 / Subtype 1) (Mycoplasmoides pneumoniae).